A 488-amino-acid polypeptide reads, in one-letter code: Glutamate--tRNA ligase (488 aa).

A 'HIGH' region motif is present at residues P8–G18. 4 residues coordinate Zn(2+): C105, C107, C132, and H134. The 'KMSKS' region motif lies at K249–R253. Position 252 (K252) interacts with ATP.

It belongs to the class-I aminoacyl-tRNA synthetase family. Glutamate--tRNA ligase type 1 subfamily. In terms of assembly, monomer. It depends on Zn(2+) as a cofactor.

It localises to the cytoplasm. The catalysed reaction is tRNA(Glu) + L-glutamate + ATP = L-glutamyl-tRNA(Glu) + AMP + diphosphate. In terms of biological role, catalyzes the attachment of glutamate to tRNA(Glu) in a two-step reaction: glutamate is first activated by ATP to form Glu-AMP and then transferred to the acceptor end of tRNA(Glu). The polypeptide is Glutamate--tRNA ligase (Desulfitobacterium hafniense (strain Y51)).